Here is a 206-residue protein sequence, read N- to C-terminus: Amelogenin, Y isoform (206 aa).

Positions 1–16 (MGTWILFACLVGAAFA) are cleaved as a signal peptide. Residues 118–180 (VPGQQSMTPT…PPLPPMFPLR (63 aa)) form a disordered region. Over residues 128–142 (QHHQPNLPLPAQQPF) the composition is skewed to low complexity. Residues 143–180 (QPQPVQPQPHQPMQPQPPVQPMQPLLPQPPLPPMFPLR) are compositionally biased toward pro residues.

Belongs to the amelogenin family.

It localises to the secreted. The protein localises to the extracellular space. The protein resides in the extracellular matrix. In terms of biological role, plays a role in biomineralization. Seems to regulate the formation of crystallites during the secretory stage of tooth enamel development. Thought to play a major role in the structural organization and mineralization of developing enamel. The chain is Amelogenin, Y isoform (AMELY) from Homo sapiens (Human).